The primary structure comprises 259 residues: Thiazole synthase (259 aa).

Residue K98 is the Schiff-base intermediate with DXP of the active site. 1-deoxy-D-xylulose 5-phosphate contacts are provided by residues G159, 185-186 (AG), and 207-208 (NS).

This sequence belongs to the ThiG family. Homotetramer. Forms heterodimers with either ThiH or ThiS.

It localises to the cytoplasm. It carries out the reaction [ThiS sulfur-carrier protein]-C-terminal-Gly-aminoethanethioate + 2-iminoacetate + 1-deoxy-D-xylulose 5-phosphate = [ThiS sulfur-carrier protein]-C-terminal Gly-Gly + 2-[(2R,5Z)-2-carboxy-4-methylthiazol-5(2H)-ylidene]ethyl phosphate + 2 H2O + H(+). It functions in the pathway cofactor biosynthesis; thiamine diphosphate biosynthesis. Functionally, catalyzes the rearrangement of 1-deoxy-D-xylulose 5-phosphate (DXP) to produce the thiazole phosphate moiety of thiamine. Sulfur is provided by the thiocarboxylate moiety of the carrier protein ThiS. In vitro, sulfur can be provided by H(2)S. In Chlorobium phaeobacteroides (strain DSM 266 / SMG 266 / 2430), this protein is Thiazole synthase.